Reading from the N-terminus, the 486-residue chain is Protein nucleotidyltransferase YdiU (486 aa).

ATP is bound by residues Gly90, Gly92, Arg93, Lys113, Asp125, Gly126, Arg176, and Arg183. Asp252 (proton acceptor) is an active-site residue. The Mg(2+) site is built by Asn253 and Asp262. Asp262 provides a ligand contact to ATP.

It belongs to the SELO family. Requires Mg(2+) as cofactor. Mn(2+) serves as cofactor.

The enzyme catalyses L-seryl-[protein] + ATP = 3-O-(5'-adenylyl)-L-seryl-[protein] + diphosphate. It catalyses the reaction L-threonyl-[protein] + ATP = 3-O-(5'-adenylyl)-L-threonyl-[protein] + diphosphate. It carries out the reaction L-tyrosyl-[protein] + ATP = O-(5'-adenylyl)-L-tyrosyl-[protein] + diphosphate. The catalysed reaction is L-histidyl-[protein] + UTP = N(tele)-(5'-uridylyl)-L-histidyl-[protein] + diphosphate. The enzyme catalyses L-seryl-[protein] + UTP = O-(5'-uridylyl)-L-seryl-[protein] + diphosphate. It catalyses the reaction L-tyrosyl-[protein] + UTP = O-(5'-uridylyl)-L-tyrosyl-[protein] + diphosphate. Nucleotidyltransferase involved in the post-translational modification of proteins. It can catalyze the addition of adenosine monophosphate (AMP) or uridine monophosphate (UMP) to a protein, resulting in modifications known as AMPylation and UMPylation. This chain is Protein nucleotidyltransferase YdiU, found in Pseudomonas aeruginosa (strain LESB58).